We begin with the raw amino-acid sequence, 132 residues long: Chaperone protein SycT (132 aa).

Binds to YopT.

In terms of biological role, functions as a specific chaperone for YopT. The polypeptide is Chaperone protein SycT (sycT) (Yersinia pestis).